The sequence spans 249 residues: 2,3-bisphosphoglycerate-dependent phosphoglycerate mutase 2 (249 aa).

Substrate is bound by residues 8-15 (RHGESIWN), 21-22 (TG), Arg-60, 87-90 (ERHY), Lys-98, 114-115 (RR), and 183-184 (GN). The active-site Tele-phosphohistidine intermediate is the His-9. Glu-87 functions as the Proton donor/acceptor in the catalytic mechanism.

It belongs to the phosphoglycerate mutase family. BPG-dependent PGAM subfamily. In terms of assembly, homodimer.

It catalyses the reaction (2R)-2-phosphoglycerate = (2R)-3-phosphoglycerate. The protein operates within carbohydrate degradation; glycolysis; pyruvate from D-glyceraldehyde 3-phosphate: step 3/5. In terms of biological role, catalyzes the interconversion of 2-phosphoglycerate and 3-phosphoglycerate. This Nitrosomonas europaea (strain ATCC 19718 / CIP 103999 / KCTC 2705 / NBRC 14298) protein is 2,3-bisphosphoglycerate-dependent phosphoglycerate mutase 2.